A 229-amino-acid polypeptide reads, in one-letter code: Putative N-acetylmannosamine-6-phosphate 2-epimerase (229 aa).

Belongs to the NanE family.

The catalysed reaction is an N-acyl-D-glucosamine 6-phosphate = an N-acyl-D-mannosamine 6-phosphate. It participates in amino-sugar metabolism; N-acetylneuraminate degradation; D-fructose 6-phosphate from N-acetylneuraminate: step 3/5. Converts N-acetylmannosamine-6-phosphate (ManNAc-6-P) to N-acetylglucosamine-6-phosphate (GlcNAc-6-P). The sequence is that of Putative N-acetylmannosamine-6-phosphate 2-epimerase from Salmonella agona (strain SL483).